The following is a 203-amino-acid chain: RNA pyrophosphohydrolase (203 aa).

A Nudix hydrolase domain is found at glycine 6–threonine 149. Residues glycine 38–glycine 59 carry the Nudix box motif. Positions arginine 170–glutamate 203 are disordered. The segment covering arginine 173–aspartate 185 has biased composition (basic and acidic residues).

This sequence belongs to the Nudix hydrolase family. RppH subfamily. A divalent metal cation is required as a cofactor.

Functionally, accelerates the degradation of transcripts by removing pyrophosphate from the 5'-end of triphosphorylated RNA, leading to a more labile monophosphorylated state that can stimulate subsequent ribonuclease cleavage. The protein is RNA pyrophosphohydrolase of Leptothrix cholodnii (strain ATCC 51168 / LMG 8142 / SP-6) (Leptothrix discophora (strain SP-6)).